Reading from the N-terminus, the 229-residue chain is NAD(P)H-quinone oxidoreductase subunit K, chloroplastic (229 aa).

Residues C43, C44, C108, and C139 each coordinate [4Fe-4S] cluster.

This sequence belongs to the complex I 20 kDa subunit family. As to quaternary structure, NDH is composed of at least 16 different subunits, 5 of which are encoded in the nucleus. It depends on [4Fe-4S] cluster as a cofactor.

It is found in the plastid. The protein localises to the chloroplast thylakoid membrane. The catalysed reaction is a plastoquinone + NADH + (n+1) H(+)(in) = a plastoquinol + NAD(+) + n H(+)(out). The enzyme catalyses a plastoquinone + NADPH + (n+1) H(+)(in) = a plastoquinol + NADP(+) + n H(+)(out). Its function is as follows. NDH shuttles electrons from NAD(P)H:plastoquinone, via FMN and iron-sulfur (Fe-S) centers, to quinones in the photosynthetic chain and possibly in a chloroplast respiratory chain. The immediate electron acceptor for the enzyme in this species is believed to be plastoquinone. Couples the redox reaction to proton translocation, and thus conserves the redox energy in a proton gradient. This chain is NAD(P)H-quinone oxidoreductase subunit K, chloroplastic, found in Aethionema grandiflorum (Persian stone-cress).